Consider the following 101-residue polypeptide: Ascorbate-specific PTS system EIIB component (101 aa).

Residues 3–96 (VRILAVCGNG…KLLEVIKAHF (94 aa)) form the PTS EIIB type-2 domain. Catalysis depends on Cys9, which acts as the Phosphocysteine intermediate. Cys9 is subject to Phosphocysteine.

The protein localises to the cytoplasm. The catalysed reaction is N(pros)-phospho-L-histidyl-[protein] + L-ascorbate(out) = L-ascorbate 6-phosphate(in) + L-histidyl-[protein]. Functionally, the phosphoenolpyruvate-dependent sugar phosphotransferase system (sugar PTS), a major carbohydrate active transport system, catalyzes the phosphorylation of incoming sugar substrates concomitantly with their translocation across the cell membrane. The enzyme II UlaABC PTS system is involved in ascorbate transport. In Shigella sonnei (strain Ss046), this protein is Ascorbate-specific PTS system EIIB component (ulaB).